Consider the following 124-residue polypeptide: Small ribosomal subunit protein uS12 (124 aa).

Aspartate 89 carries the 3-methylthioaspartic acid modification.

This sequence belongs to the universal ribosomal protein uS12 family. Part of the 30S ribosomal subunit. Contacts proteins S8 and S17. May interact with IF1 in the 30S initiation complex.

Functionally, with S4 and S5 plays an important role in translational accuracy. In terms of biological role, interacts with and stabilizes bases of the 16S rRNA that are involved in tRNA selection in the A site and with the mRNA backbone. Located at the interface of the 30S and 50S subunits, it traverses the body of the 30S subunit contacting proteins on the other side and probably holding the rRNA structure together. The combined cluster of proteins S8, S12 and S17 appears to hold together the shoulder and platform of the 30S subunit. The chain is Small ribosomal subunit protein uS12 from Arthrobacter sp. (strain FB24).